Here is a 340-residue protein sequence, read N- to C-terminus: Short-chain dehydrogenase/reductase prx1 (340 aa).

NADP(+) is bound by residues Ile-60, Lys-84, Asp-104, Asn-131, and Lys-162. The active-site Proton donor is Ser-184. Residues Tyr-210 and Lys-214 each contribute to the NADP(+) site. Tyr-210 (proton acceptor) is an active-site residue. The active-site Lowers pKa of active site Tyr is the Lys-214.

Belongs to the short-chain dehydrogenases/reductases (SDR) family.

The protein operates within sesquiterpene biosynthesis. Functionally, short-chain dehydrogenase/reductase; part of the gene cluster that mediates the biosynthesis of PR-toxin, a bicyclic sesquiterpene belonging to the eremophilane class and acting as a mycotoxin. The first step of the pathway is catalyzed by the aristolochene synthase which performs the cyclization of trans,trans-farnesyl diphosphate (FPP) to the bicyclic sesquiterpene aristolochene. Following the formation of aristolochene, the non-oxygenated aristolochene is converted to the trioxygenated intermediate eremofortin B, via 7-epi-neopetasone. This conversion appears to involve three enzymes, a hydroxysterol oxidase-like enzyme, the quinone-oxidase prx3 that forms the quinone-type-structure in the bicyclic nucleus of aristolochene with the C8-oxo group and the C-3 hydroxyl group, and the P450 monooxygenase ORF6 that introduces the epoxide at the double bond between carbons 1 and 2. No monoxy or dioxy-intermediates have been reported to be released to the broth, so these three early oxidative reactions may be coupled together. Eremofortin B is further oxidized by another P450 monooxygenase, that introduces a second epoxide between carbons 7 and 11 prior to acetylation to eremofortin A by the acetyltransferase ORF8. The second epoxidation may be performed by a second P450 monooxygenase. After the acetylation step, eremofortin A is converted to eremofortin C and then to PR-toxin. First the conversion of eremofortin A to eremofortin C proceeds by oxidation of the side chain of the molecule at C-12 and is catalyzed by the short-chain oxidoreductase prx1. The cytochrome P450 monooxygenase ORF6 is probably also involved in this step. The primary alcohol formed at C-12 is finally oxidized by the short-chain alcohol dehydrogenase prx4 that forms PR-toxin. The polypeptide is Short-chain dehydrogenase/reductase prx1 (Penicillium roqueforti (strain FM164)).